A 387-amino-acid polypeptide reads, in one-letter code: Alpha-sarcoglycan (387 aa).

Positions M1–A24 are cleaved as a signal peptide. At Q25 to A290 the chain is on the extracellular side. N-linked (GlcNAc...) asparagine glycans are attached at residues N174 and N246. Residues L291–I311 form a helical membrane-spanning segment. Residues M312 to H387 lie on the Cytoplasmic side of the membrane. S377 is modified (phosphoserine).

It belongs to the sarcoglycan alpha/epsilon family. In terms of assembly, cross-link to form 2 major subcomplexes: one consisting of SGCB, SGCD and SGCG and the other consisting of SGCB and SGCD. The association between SGCB and SGCG is particularly strong while SGCA is loosely associated with the other sarcoglycans. Interacts with the syntrophin SNTA1.

It is found in the cell membrane. The protein localises to the sarcolemma. The protein resides in the cytoplasm. Its subcellular location is the cytoskeleton. Functionally, component of the sarcoglycan complex, a subcomplex of the dystrophin-glycoprotein complex which forms a link between the F-actin cytoskeleton and the extracellular matrix. This is Alpha-sarcoglycan (SGCA) from Oryctolagus cuniculus (Rabbit).